The chain runs to 835 residues: Probable alpha-glucuronidase A (835 aa).

A signal peptide spans 1 to 18 (MRWSFLTVLLWLVSLTGA). 12 N-linked (GlcNAc...) asparagine glycosylation sites follow: Asn-49, Asn-101, Asn-148, Asn-221, Asn-278, Asn-309, Asn-342, Asn-460, Asn-522, Asn-571, Asn-677, and Asn-727.

This sequence belongs to the glycosyl hydrolase 67 family.

The protein localises to the secreted. The catalysed reaction is an alpha-D-glucuronoside + H2O = D-glucuronate + an alcohol. Its function is as follows. Alpha-glucuronidase involved in the hydrolysis of xylan, a major structural heterogeneous polysaccharide found in plant biomass representing the second most abundant polysaccharide in the biosphere, after cellulose. Releases 4-O-methylglucuronic acid from xylan. The protein is Probable alpha-glucuronidase A (aguA) of Aspergillus oryzae (strain ATCC 42149 / RIB 40) (Yellow koji mold).